We begin with the raw amino-acid sequence, 130 residues long: Protachykinin-1 (130 aa).

The N-terminal stretch at methionine 1–alanine 19 is a signal peptide. Positions glutamate 20 to alanine 56 are excised as a propeptide. 2 positions are modified to methionine amide: methionine 68 and methionine 107.

The protein belongs to the tachykinin family. The substance P form is cleaved at Pro-59 by the prolyl endopeptidase FAP (seprase) activity (in vitro). Substance P is also cleaved and degraded by Angiotensin-converting enzyme (ACE) and neprilysin (MME).

The protein resides in the secreted. Tachykinins are active peptides which excite neurons, evoke behavioral responses, are potent vasodilators and secretagogues, and contract (directly or indirectly) many smooth muscles. The protein is Protachykinin-1 (TAC1) of Mesocricetus auratus (Golden hamster).